The primary structure comprises 417 residues: Tyrosine--tRNA ligase (417 aa).

Y39 is an L-tyrosine binding site. The 'HIGH' region motif lies at 44 to 53 (PTAASLHAGG). L-tyrosine-binding residues include Y176 and Q180. The short motif at 236–240 (KMGKS) is the 'KMSKS' region element. Position 239 (K239) interacts with ATP. The region spanning 350 to 417 (LGLLTLLVRA…KKKHLLVRPV (68 aa)) is the S4 RNA-binding domain.

This sequence belongs to the class-I aminoacyl-tRNA synthetase family. TyrS type 1 subfamily. As to quaternary structure, homodimer.

It localises to the cytoplasm. It carries out the reaction tRNA(Tyr) + L-tyrosine + ATP = L-tyrosyl-tRNA(Tyr) + AMP + diphosphate + H(+). In terms of biological role, catalyzes the attachment of tyrosine to tRNA(Tyr) in a two-step reaction: tyrosine is first activated by ATP to form Tyr-AMP and then transferred to the acceptor end of tRNA(Tyr). In Rhizobium meliloti (strain 1021) (Ensifer meliloti), this protein is Tyrosine--tRNA ligase.